A 253-amino-acid chain; its full sequence is TCF3 fusion partner (253 aa).

Disordered stretches follow at residues 49 to 72 (SGGLGGSGLRERDEEEEAARGRRR) and 142 to 211 (DEGS…PELA). The residue at position 167 (Ser167) is a Phosphoserine. A compositionally biased stretch (pro residues) spans 170–181 (RRTPAPPEPGSP). A Phosphothreonine modification is found at Thr172. Residues Ser180 and Ser188 each carry the phosphoserine modification. Residue Thr207 is modified to Phosphothreonine. Lys216 participates in a covalent cross-link: Glycyl lysine isopeptide (Lys-Gly) (interchain with G-Cter in SUMO2). Residues 234–253 (VSRGPDKLLPYPTLASPASD) are disordered. Phosphoserine occurs at positions 249 and 252.

As to quaternary structure, interacts with NOL3; translocates NOL3 into the nucleus and negatively regulated TFPT-induced cell death. Component of the chromatin remodeling INO80 complex; specifically part of a complex module associated with the N-terminus of INO80.

The protein localises to the nucleus. Its function is as follows. Appears to promote apoptosis in a p53/TP53-independent manner. In terms of biological role, putative regulatory component of the chromatin remodeling INO80 complex which is involved in transcriptional regulation, DNA replication and probably DNA repair. This Homo sapiens (Human) protein is TCF3 fusion partner (TFPT).